Reading from the N-terminus, the 856-residue chain is Structure-specific endonuclease subunit SLX4 (856 aa).

Residues 1–19 (MDNAAIASQSNTPPSNGRS) are compositionally biased toward polar residues. Disordered regions lie at residues 1-24 (MDNAAIASQSNTPPSNGRSSARFV), 39-61 (IEPSSPFSPPSPSTLLTSLSKSP), 88-121 (VDSPKRQDKSITGSKAKPASTMRHGQRTASHKMA), 139-201 (KTRK…TDNE), 296-326 (GIQTPTESRPATNDSQSISSKQQRVKVKKPQ), 362-392 (KKMGVTKRTSGTERANAARGKSDTLKNGNGP), 621-640 (SKSSKLEPKPNQRNHKSQGD), 653-688 (RSDSISFVNTRSPKKRLAKTSVKSQESKSFSLSNEG), and 715-742 (DSVGEALPLSPSHSSNGNGTLHHPQDCD). The segment covering 51–60 (STLLTSLSKS) has biased composition (low complexity). Residues 139–152 (KTRKKKAATAKRTR) show a composition bias toward basic residues. The segment covering 296–309 (GIQTPTESRPATND) has biased composition (polar residues). Over residues 673-686 (SVKSQESKSFSLSN) the composition is skewed to polar residues.

This sequence belongs to the SLX4 family. As to quaternary structure, forms a heterodimer with SLX1. In terms of processing, phosphorylated in response to DNA damage.

It localises to the nucleus. Regulatory subunit of the SLX1-SLX4 structure-specific endonuclease that resolves DNA secondary structures generated during DNA repair and recombination. Has endonuclease activity towards branched DNA substrates, introducing single-strand cuts in duplex DNA close to junctions with ss-DNA. This Ajellomyces dermatitidis (strain ER-3 / ATCC MYA-2586) (Blastomyces dermatitidis) protein is Structure-specific endonuclease subunit SLX4.